A 7094-amino-acid chain; its full sequence is Replicase polyprotein 1ab (7094 aa).

The CoV Nsp1 globular domain occupies 54-196 (PENHVMVDCR…PWVMYLRKCG (143 aa)). The BetaCoV Nsp1 C-terminal domain occupies 216 to 246 (FKVEDAYDLVHDEPKGKFSKKAYALIRGYRG). The CoV Nsp2 N-terminal domain maps to 250 to 519 (LLYVDQYGCD…LICKALYLDY (270 aa)). Zn(2+) contacts are provided by C392, C397, C413, and C416. The interval 392-416 (CEQDLCDFKGWVPGNMIDGFACTTC) is C4. The CoV Nsp2 middle domain occupies 524-713 (CGNLHQRELL…AQAFRSVAKV (190 aa)). Positions 733-851 (RRRICLSGSK…LDQAWRVPCA (119 aa)) constitute a CoV Nsp2 C-terminal domain. Positions 853–966 (RRVTFKEQPT…LYCAFTAPED (114 aa)) constitute a Ubiquitin-like 1 domain. A Peptidase C16 1 domain is found at 1036 to 1274 (DLESVIQDYE…IAQLYGSCIT (239 aa)). C1074 serves as the catalytic For PL1-PRO activity. Residues C1151, C1154, C1177, and C1179 each contribute to the Zn(2+) site. A C4-type 1 zinc finger spans residues 1151–1179 (CIKCDLALKLKGLDAMFFYGDVVSHVCKC). Residues H1225 and D1236 each act as for PL1-PRO activity in the active site. Positions 1275–1435 (PNVCFVKGDI…LISKCQITAV (161 aa)) constitute a Macro domain. A DPUP domain is found at 1491 to 1563 (DDARTFVQSN…VAQIKALFLD (73 aa)). The Ubiquitin-like 2 domain occupies 1562–1617 (LDKVDILLTVDGVNFTNRFVPVGESFGKSLGNVFCDGVNVTKHKCDINYKGKVFFQ). The Peptidase C16 2 domain occupies 1631–1892 (SSFNFDQKEL…KIEYNPDLSQ (262 aa)). The active-site For PL2-PRO activity is C1671. C1749, C1751, C1783, and C1785 together coordinate Zn(2+). The segment at 1749 to 1785 (CKCGVKQEQRTGVDAVMHFGTLSREDLEIGYTVDCSC) adopts a C4-type 2 zinc-finger fold. Catalysis depends on for PL2-PRO activity residues H1828 and D1842. In terms of domain architecture, Nucleic acid-binding spans 1906–2007 (IKAQFKTFEK…TYFNRPLLVD (102 aa)). One can recognise a G2M domain in the interval 2020–2169 (DDGGDISESD…ADNKVIYTTE (150 aa)). The next 3 membrane-spanning stretches (helical) occupy residues 2138 to 2158 (ISACFNFIKWLFVLLFGWIKI), 2199 to 2219 (ACIIATIFLLWFNFIYANVIF), and 2227 to 2247 (IGFLPTFVGKIAQWIKSTFSL). Residues 2138 to 2385 (ISACFNFIKW…ASFIKLFILF (248 aa)) are HD1. The region spanning 2235 to 2296 (GKIAQWIKST…AIDVVQYEAD (62 aa)) is the 3Ecto domain. Cystine bridges form between C2251/C2275 and C2266/C2272. 3 helical membrane-spanning segments follow: residues 2313 to 2333 (LIVSYALYTAWFYPLFALISI), 2343 to 2363 (LFMLSTLHWSVRLLVSLANML), and 2365 to 2385 (AHVFMRFYIIIASFIKLFILF). The segment at 2383 to 2473 (ILFRHVAYGC…ELKRPIQPTD (91 aa)) is Y1. Positions 2383-2750 (ILFRHVAYGC…LTTPFSLKGG (368 aa)) constitute a CoV Nsp3 Y domain. Positions 2387, 2392, 2397, 2400, 2433, 2436, 2440, and 2443 each coordinate Zn(2+). Positions 2387-2400 (HVAYGCSKPGCLFC) are ZF1. Positions 2433–2443 (CSKHQWNCIDC) are ZF2. Residues 2474-2566 (VAYHTVTDVK…MVDKNLITTA (93 aa)) are Y2. The interval 2474–2750 (VAYHTVTDVK…LTTPFSLKGG (277 aa)) is coV-Y. A Y3 region spans residues 2567–2649 (NTGTSVTETM…DSVMSAVSAG (83 aa)). Residues 2650–2750 (LELTDESCNN…LTTPFSLKGG (101 aa)) are Y4. The next 7 helical transmembrane spans lie at 2752-2772 (VFSYFVYVCFLLSLVCFIGLW), 2824-2844 (STFGLSYYSNSMACPIVVAVV), 3009-3029 (VFDLIYQLFKGLAQPVDFLAL), 3031-3051 (ASSIAGAILAVIVVLVFYYLI), 3063-3083 (IVFVNVIVWCVNFMMLFVFQV), 3090-3110 (VYAICYFYATLYFPSEISVIM), and 3115-3135 (LVMYGTIMPLWFCLLYISVVV). An HD2 region spans residues 2752 to 3135 (VFSYFVYVCF…FCLLYISVVV (384 aa)). Residues 3149–3246 (LGTSVRSDGT…TASVSTSFLQ (98 aa)) enclose the Nsp4C domain. A Peptidase C30 domain is found at 3247–3549 (SGIVKMVNPT…YQQLAGIKLQ (303 aa)). Residues H3287 and C3391 each act as for 3CL-PRO activity in the active site. The next 7 helical transmembrane spans lie at 3558–3578 (GIVCWIMASTFLFSCIITAFV), 3588–3608 (TNMLSITFCALCVISLAMLLV), 3614–3634 (YLTMYIIPVLFTLLYNNYLVV), 3657–3677 (TYTDEVIYGMLLLIGMVFVTL), 3684–3704 (LFSFIMFVGRVISVVSLWYMG), 3711–3731 (ILLMLASLFGTYTWTTALSMA), and 3755–3775 (IVLVCYLFIGYIISCYWGLFS). Residues 3558–3775 (GIVCWIMAST…IISCYWGLFS (218 aa)) form an HD3 region. The region spanning 3837–3925 (SKLTDVKCAN…DYAKDNTVLQ (89 aa)) is the RdRp Nsp7 cofactor domain. Residues 3926–4122 (ALQSEFVNMA…HNEVSATVLQ (197 aa)) form the RdRp Nsp8 cofactor domain. The 110-residue stretch at 4123 to 4232 (NNELMPAKLK…GTISSTVRLQ (110 aa)) folds into the Nsp9 ssRNA-binding domain. Residues 4233–4370 (AGTATEYASN…CVSTDTTVQS (138 aa)) form the ExoN/MTase coactivator domain. Residues C4306, C4309, H4315, C4322, C4348, C4351, C4359, and C4361 each coordinate Zn(2+). Zinc fingers lie at residues 4306–4322 (CIYCRARVEHPDVDGLC) and 4348–4361 (CQVCGFWRDGSCSC). Positions 4375 to 4630 (FLNRVRGTSV…DCELYVNNAY (256 aa)) constitute a NiRAN domain. Mn(2+)-binding residues include N4578 and D4587. Residues 4631 to 4729 (RLFDLVQYDF…MNMDVDTHRY (99 aa)) enclose the Nsp12 Interface domain. Zn(2+) contacts are provided by H4660, C4666, C4671, C4675, and C4852. One can recognise a Nsp12 RNA-dependent RNA polymerase domain in the interval 4730–5297 (RLSLKDLLLY…NMYLRSAVMQ (568 aa)). The interval 4732-4946 (SLKDLLLYAA…HQKCLKSIAA (215 aa)) is rdRp Fingers N-ter. Residues 4947–4985 (TRGVPVVIGTTKFYGGWDDMLRRLIKDVDNPVLMGWDYP) are rdRp Palm N-ter. The 163-residue stretch at 4977-5139 (PVLMGWDYPK…CYNSDYASKG (163 aa)) folds into the RdRp catalytic domain. Residues 4986–5044 (KCDRAMPNILRIVSSLVLARKHEACCSQSDRFYRLANECAQVLSEIVMCGGCYYVKPGG) are rdRp Fingers C-ter. 3 residues coordinate Zn(2+): H5007, C5010, and C5011. The interval 5045–5180 (TSSGDATTAF…NNGPHEFCSQ (136 aa)) is rdRp Palm C-ter. Residues S5124, D5125, and D5126 contribute to the active site. Residues 5181-5297 (HTMLVKMDGD…NMYLRSAVMQ (117 aa)) are rdRp Thumb. Residues 5298–5410 (SVGACVVCSS…DDFNRIASCK (113 aa)) enclose the CV ZBD domain. The Zn(2+) site is built by C5302, C5305, C5313, C5316, C5323, C5326, H5330, H5336, C5347, C5352, C5369, and H5372. Residues 5553–5734 (SVLETFQNNV…MCCLGPDIFL (182 aa)) form the (+)RNA virus helicase ATP-binding domain. 5578–5585 (GPPGTGKS) contacts ATP. The (+)RNA virus helicase C-terminal domain maps to 5735–5904 (GTCYRCPKEI…VETRVQCSTN (170 aa)). The ExoN domain occupies 5971–6186 (LFITKEEAVK…RCLAVYDCFC (216 aa)). Catalysis depends on residues D5989, E5991, and E6090. Residues C6106, C6109, C6125, H6128, H6156, C6160, and H6163 each coordinate Zn(2+). Catalysis depends on residues H6167 and D6172. C6178 contributes to the Zn(2+) binding site. The N7-MTase domain maps to 6195-6421 (YPIISNELSI…NLWNTFTKLQ (227 aa)). 6230–6236 (DIGNPKA) contributes to the S-adenosyl-L-methionine binding site. The gpppA-binding stretch occupies residues 6308 to 6322 (CNGGSLYVNKHAFHT). Positions 6346, 6367, 6378, and 6381 each coordinate Zn(2+). Residues 6422 to 6482 (SLENVVYNLV…NVAVELFAKR (61 aa)) form the Nsp15 N-terminal oligomerization domain. One can recognise an AV-Nsp11N/CoV-Nsp15M domain in the interval 6483–6603 (SIRHHPELKL…FAVRKEGQDV (121 aa)). The NendoU domain maps to 6653–6792 (TCRTDMEKDF…NDEKVMTFYP (140 aa)). Active-site residues include H6683, H6698, K6738, K6841, D6925, K6965, and E6998. The 295-residue stretch at 6797–7091 (ASDWKPGYSM…KEVFVGDSLV (295 aa)) folds into the Nidovirus-type SAM-dependent 2'-O-MTase domain.

This sequence belongs to the coronaviruses polyprotein 1ab family. As to quaternary structure, interacts with host PHB and PHB2. Interacts with papain-like protease nsp3 and non-structural protein 6. In terms of assembly, monomer. Homodimer. Only the homodimer shows catalytic activity. As to quaternary structure, interacts with nsp8 and nsp12 to form the replication-transcription complex (RTC): nsp12, nsp7, two subunits of nsp8, and up to two subunits of nsp13. Interacts with nsp7, nsp13 and nsp12 to form the replication-transcription complex (RTC): nsp12, nsp7, two subunits of nsp8, and up to two subunits of nsp13. In terms of assembly, interacts with nsp12. As to quaternary structure, interacts with proofreading exoribonuclease nsp14 and 2'-O-methyltransferase nsp16; these interactions enhance nsp14 and nsp16 enzymatic activities. Interacts with nsp7 and nsp8 to form the replication-transcription complex (RTC): nsp12, nsp7, two subunits of nsp8, and up to two subunits of nsp13. Interacts with nsp9. In terms of assembly, interacts with nsp8 to form the replication-transcription complex (RTC): nsp12, nsp7, two subunits of nsp8, and up to two subunits of nsp13. It depends on Mn(2+) as a cofactor. The cofactor is Mg(2+). Post-translationally, specific enzymatic cleavages in vivo by its own proteases yield mature proteins. 3CL-PRO and PL-PRO proteinases are autocatalytically processed.

Its subcellular location is the host membrane. It localises to the host cytoplasm. It is found in the host perinuclear region. The protein localises to the host endoplasmic reticulum-Golgi intermediate compartment. It catalyses the reaction RNA(n) + a ribonucleoside 5'-triphosphate = RNA(n+1) + diphosphate. The enzyme catalyses ATP + H2O = ADP + phosphate + H(+). It carries out the reaction Thiol-dependent hydrolysis of ester, thioester, amide, peptide and isopeptide bonds formed by the C-terminal Gly of ubiquitin (a 76-residue protein attached to proteins as an intracellular targeting signal).. The catalysed reaction is a 5'-end (N(7)-methyl 5'-triphosphoguanosine)-ribonucleoside in mRNA + S-adenosyl-L-methionine = a 5'-end (N(7)-methyl 5'-triphosphoguanosine)-(2'-O-methyl-ribonucleoside) in mRNA + S-adenosyl-L-homocysteine + H(+). It catalyses the reaction uridylyl-uridylyl-ribonucleotide-RNA = a 3'-end uridylyl-2',3'-cyclophospho-uridine-RNA + a 5'-end dephospho-ribonucleoside-RNA. The enzyme catalyses a 5'-end diphospho-ribonucleoside in mRNA + GTP + H(+) = a 5'-end (5'-triphosphoguanosine)-ribonucleoside in mRNA + diphosphate. It carries out the reaction a 5'-end (5'-triphosphoguanosine)-ribonucleoside in mRNA + S-adenosyl-L-methionine = a 5'-end (N(7)-methyl 5'-triphosphoguanosine)-ribonucleoside in mRNA + S-adenosyl-L-homocysteine. The replicase polyprotein of coronaviruses is a multifunctional protein: it contains the activities necessary for the transcription of negative stranded RNA, leader RNA, subgenomic mRNAs and progeny virion RNA as well as proteinases responsible for the cleavage of the polyprotein into functional products. Functionally, inhibits host translation by interacting with the 40S ribosomal subunit. The nsp1-40S ribosome complex further induces an endonucleolytic cleavage near the 5'UTR of host mRNAs, targeting them for degradation. Viral mRNAs are not susceptible to nsp1-mediated endonucleolytic RNA cleavage thanks to the presence of a 5'-end leader sequence and are therefore protected from degradation. By suppressing host gene expression, nsp1 facilitates efficient viral gene expression in infected cells and evasion from host immune response. In terms of biological role, may play a role in the modulation of host cell survival signaling pathway by interacting with host PHB and PHB2. Indeed, these two proteins play a role in maintaining the functional integrity of the mitochondria and protecting cells from various stresses. Its function is as follows. Responsible for the cleavages located at the N-terminus of the replicase polyprotein. In addition, PL-PRO possesses a deubiquitinating/deISGylating activity and processes both 'Lys-48'- and 'Lys-63'-linked polyubiquitin chains from cellular substrates. Participates together with nsp4 in the assembly of virally-induced cytoplasmic double-membrane vesicles necessary for viral replication. Antagonizes innate immune induction of type I interferon by blocking the phosphorylation, dimerization and subsequent nuclear translocation of host IRF3. Also prevents host NF-kappa-B signaling. Participates in the assembly of virally-induced cytoplasmic double-membrane vesicles necessary for viral replication. Functionally, cleaves the C-terminus of replicase polyprotein at 11 sites. Recognizes substrates containing the core sequence [ILMVF]-Q-|-[SGACN]. Also able to bind an ADP-ribose-1''-phosphate (ADRP). In terms of biological role, plays a role in the initial induction of autophagosomes from host endoplasmic reticulum. Later, limits the expansion of these phagosomes that are no longer able to deliver viral components to lysosomes. Its function is as follows. Forms a hexadecamer with nsp8 (8 subunits of each) that may participate in viral replication by acting as a primase. Alternatively, may synthesize substantially longer products than oligonucleotide primers. Forms a hexadecamer with nsp7 (8 subunits of each) that may participate in viral replication by acting as a primase. Alternatively, may synthesize substantially longer products than oligonucleotide primers. Functionally, forms a primer, NSP9-pU, which is utilized by the polymerase for the initiation of RNA chains. Interacts with ribosome signal recognition particle RNA (SRP). Together with NSP8, suppress protein integration into the cell membrane, thereby disrupting host immune defenses. In terms of biological role, plays a pivotal role in viral transcription by stimulating both nsp14 3'-5' exoribonuclease and nsp16 2'-O-methyltransferase activities. Therefore plays an essential role in viral mRNAs cap methylation. Its function is as follows. RNA-directed RNA polymerase that catalyzes the transcription of viral genomic and subgenomic RNAs. Acts in complex with nsp7 and nsp8 to transcribe both the minus and positive strands of genomic RNA. The kinase-like NiRAN domain of NSP12 attaches one or more nucleotides to the amino terminus of NSP9, forming a covalent RNA-protein intermediate that serves as transcription/replication primer. Subgenomic RNAs (sgRNAs) are formed by discontinuous transcription: The polymerase has the ability to pause at transcription-regulating sequences (TRS) and jump to the leader TRS, resulting in a major deletion. This creates a series of subgenomic RNAs that are replicated, transcribed and translated. In addition, Nsp12 is a subunit of the viral RNA capping enzyme that catalyzes the RNA guanylyltransferase reaction for genomic and sub-genomic RNAs. Subsequently, the NiRAN domain transfers RNA to GDP, and forms the core cap structure GpppA-RNA. Multi-functional protein with a zinc-binding domain in N-terminus displaying RNA and DNA duplex-unwinding activities with 5' to 3' polarity. Activity of helicase is dependent on magnesium. Functionally, plays a role in viral RNA synthesis through two distinct activities. The N7-guanine methyltransferase activity plays a role in the formation of the cap structure GpppA-RNA. The proofreading exoribonuclease reduces the sensitivity of the virus to RNA mutagens during replication. This activity acts on both ssRNA and dsRNA in a 3'-5' direction. In terms of biological role, plays a role in viral transcription/replication and prevents the simultaneous activation of host cell dsRNA sensors, such as MDA5/IFIH1, OAS, and PKR. Acts by degrading the 5'-polyuridines generated during replication of the poly(A) region of viral genomic and subgenomic RNAs. Catalyzes a two-step reaction in which a 2'3'-cyclic phosphate (2'3'-cP) is first generated by 2'-O transesterification, which is then hydrolyzed to a 3'-phosphate (3'-P). If not degraded, poly(U) RNA would hybridize with poly(A) RNA tails and activate host dsRNA sensors. Its function is as follows. Methyltransferase that mediates mRNA cap 2'-O-ribose methylation to the 5'-cap structure of viral mRNAs. N7-methyl guanosine cap is a prerequisite for binding of nsp16. Therefore plays an essential role in viral mRNAs cap methylation which is essential to evade immune system. This chain is Replicase polyprotein 1ab (rep), found in Bos taurus (Bovine).